We begin with the raw amino-acid sequence, 1522 residues long: Sodium channel protein 1 brain (1522 aa).

At 1-50 (MDEKYTAKNRDKTFVVIEKRFKKNIIHRFSAKRSLFLFTPRNPIRRLAVC) the chain is on the cytoplasmic side. One copy of the I repeat lies at 41-342 (RNPIRRLAVC…VATAYELEVK (302 aa)). The helical transmembrane segment at 51–70 (IATNVCFDYFLMFTIMINCV) threads the bilayer. At 71–77 (FLAMPDI) the chain is on the extracellular side. The helical transmembrane segment at 78–99 (SEFAEYIFLGIYTMEMAIKLVA) threads the bilayer. Topologically, residues 100–112 (GGFFIDKYTYLRD) are cytoplasmic. A helical transmembrane segment spans residues 113-134 (AWNCLDFTVIMISYITLLLQTI). The Extracellular portion of the chain corresponds to 135–143 (NDKVISDIT). A helical; Voltage-sensor transmembrane segment spans residues 144 to 167 (GLRTFRVLRALRTLSIIPGLKTMV). At 168-179 (NALLRALRMLIS) the chain is on the cytoplasmic side. Residues 180-201 (VLILILFCLWIFSQAGVQLFGG) traverse the membrane as a helical segment. Residues 202-278 (ALRHKCVLQI…PNYGYTNFDS (77 aa)) lie on the Extracellular side of the membrane. A disulfide bond links cysteine 207 and cysteine 255. N-linked (GlcNAc...) asparagine glycans are attached at residues asparagine 248 and asparagine 258. The pore-forming intramembrane region spans 279–303 (IGWSMLISFQLLTQDYWEDVYNKVI). Residues 304–308 (RAHSP) lie on the Extracellular side of the membrane. Residues 309 to 331 (WTVIYFIVINFFGSLYLMNLMLA) form a helical membrane-spanning segment. The Cytoplasmic portion of the chain corresponds to 332-406 (VVATAYELEV…WLRVQSFAHC (75 aa)). One copy of the II repeat lies at 393-647 (CYNPWLRVQS…EQEVEVSSFA (255 aa)). Residues 407-426 (IITDSFTEVFIIFIIVLNTV) form a helical membrane-spanning segment. Topologically, residues 427-442 (FLAMEHHGMSMELKNV) are extracellular. The chain crosses the membrane as a helical span at residues 443-464 (LKVANYVFTTVFVLEAILKLLA). The Cytoplasmic portion of the chain corresponds to 465–472 (FNKQYFKS). Residues 473–491 (GWNICDLVVVVASLIDLGV) form a helical membrane-spanning segment. At 492–498 (EGLKGVS) the chain is on the extracellular side. Residues 499-522 (VFRSFRLLRVFHLAQSWTTMRLLL) form a helical; Voltage-sensor membrane-spanning segment. At 523 to 531 (CIILNTLGS) the chain is on the cytoplasmic side. The chain crosses the membrane as a helical span at residues 532-553 (LGYLTIILIIVIYIFAVTGLQL). The Extracellular portion of the chain corresponds to 554–575 (FHTEYTPDKFRGEPVPRWNFND). An intramembrane region (pore-forming) is located at residues 576 to 596 (FLHSFMMVFRILCGEWIEPMY). At 597–607 (DCMRACNGLCF) the chain is on the extracellular side. A disulfide bridge links cysteine 598 with cysteine 606. The helical transmembrane segment at 608–628 (LIFIPVTVFGKTLFFLFIGLV) threads the bilayer. Residues 629–777 (LGAFGSDTVE…WNNFRRQLMM (149 aa)) lie on the Cytoplasmic side of the membrane. The stretch at 770-1074 (NFRRQLMMVC…QNYYNTLKKL (305 aa)) is one III repeat. The helical transmembrane segment at 778 to 797 (VCENKYFETGVLVIIFASSI) threads the bilayer. Residues 798 to 815 (LLAFEDIYLNEKPRLKLA) are Extracellular-facing. Residues 816 to 837 (IFYLDITFCLLFFLEMVLKLVA) form a helical membrane-spanning segment. Residues 838–846 (LGFVHYYTH) lie on the Cytoplasmic side of the membrane. A helical membrane pass occupies residues 847–868 (FWTILDFTIVIITVISLAASGL). Topologically, residues 869–874 (GMEQIT) are extracellular. A helical; Voltage-sensor transmembrane segment spans residues 875–898 (AFRSLRTLRALRPLRAVSRWQGMK). At 899–915 (IIVNALMLSIPSIFNVL) the chain is on the cytoplasmic side. The chain crosses the membrane as a helical span at residues 916 to 937 (LVCVVFWLIFAIMGVQLFAGKF). Topologically, residues 938–976 (YKCVNETNMRIPPTEVANKIECYNKNYTWVNSNVNFDNV) are extracellular. N-linked (GlcNAc...) asparagine glycans are attached at residues asparagine 942 and asparagine 963. An intramembrane region (pore-forming) is located at residues 977 to 998 (GGAFLALFQVATFEGWMEIMAD). Residues 999–1009 (AVDVTEVDEQP) are Extracellular-facing. The helical transmembrane segment at 1010-1022 (KFEATVYYYFYFV) threads the bilayer. Residues 1023-1100 (LFIIFGSFFV…QAVVYDLVMS (78 aa)) are Cytoplasmic-facing. Position 1076 is a phosphothreonine; by PKC (threonine 1076). Residues 1083–1386 (VKRPKNKCQA…WEQYDPLATQ (304 aa)) form an IV repeat. The chain crosses the membrane as a helical span at residues 1101–1120 (NQFEIFITTIIITNMIFMAF). The Extracellular segment spans residues 1121–1132 (EHYNQSEVVTEV). N-linked (GlcNAc...) asparagine glycosylation is present at asparagine 1124. A helical membrane pass occupies residues 1133 to 1154 (LATANIAFTILYAVEAIIKIIG). Over 1155-1162 (LRIHYLRN) the chain is Cytoplasmic. The chain crosses the membrane as a helical span at residues 1163–1184 (LWNVFDFLVVTLSVMDAFLNDI). Residues 1185–1194 (FGDGIFMNPS) lie on the Extracellular side of the membrane. A helical; Voltage-sensor transmembrane segment spans residues 1195-1218 (LLRVARMFRIGRIIRLIKWAKGMR). Residues 1219–1236 (KLLFALVISLPALFNIGA) are Cytoplasmic-facing. The chain crosses the membrane as a helical span at residues 1237 to 1258 (LLMLVMFIYTIIGMSSFGQIKL). Over 1259–1270 (SGALNDQVNFQT) the chain is Extracellular. An intramembrane region (pore-forming) is located at residues 1271–1293 (FGKTFLLLVRLATSAGWNDILGP). Residues 1294-1323 (LLIQPPNCDPNYITTSTGEKIKVVNGDCGM) lie on the Extracellular side of the membrane. Residues 1324-1346 (PWLAISYMVSYIIIVFMIVFNMY) form a helical membrane-spanning segment. The Cytoplasmic segment spans residues 1347 to 1522 (IAVILENFNQ…FIISAPETAV (176 aa)).

It belongs to the sodium channel (TC 1.A.1.10) family.

The protein localises to the cell membrane. Its function is as follows. Mediates the voltage-dependent sodium ion permeability of excitable membranes. Assuming opened or closed conformations in response to the voltage difference across the membrane, the protein forms a sodium-selective channel through which Na(+) ions may pass in accordance with their electrochemical gradient. The polypeptide is Sodium channel protein 1 brain (Heterololigo bleekeri (Spear squid)).